Here is a 450-residue protein sequence, read N- to C-terminus: ATP-dependent protease ATPase subunit HslU (450 aa).

ATP contacts are provided by residues Val-29, 71–76 (GVGKTE), Asp-261, Glu-328, and Arg-400.

It belongs to the ClpX chaperone family. HslU subfamily. As to quaternary structure, a double ring-shaped homohexamer of HslV is capped on each side by a ring-shaped HslU homohexamer. The assembly of the HslU/HslV complex is dependent on binding of ATP.

It is found in the cytoplasm. Its function is as follows. ATPase subunit of a proteasome-like degradation complex; this subunit has chaperone activity. The binding of ATP and its subsequent hydrolysis by HslU are essential for unfolding of protein substrates subsequently hydrolyzed by HslV. HslU recognizes the N-terminal part of its protein substrates and unfolds these before they are guided to HslV for hydrolysis. This Rickettsia africae (strain ESF-5) protein is ATP-dependent protease ATPase subunit HslU.